The sequence spans 419 residues: Gamma-glutamyl phosphate reductase (419 aa).

It belongs to the gamma-glutamyl phosphate reductase family.

The protein resides in the cytoplasm. It catalyses the reaction L-glutamate 5-semialdehyde + phosphate + NADP(+) = L-glutamyl 5-phosphate + NADPH + H(+). It participates in amino-acid biosynthesis; L-proline biosynthesis; L-glutamate 5-semialdehyde from L-glutamate: step 2/2. In terms of biological role, catalyzes the NADPH-dependent reduction of L-glutamate 5-phosphate into L-glutamate 5-semialdehyde and phosphate. The product spontaneously undergoes cyclization to form 1-pyrroline-5-carboxylate. This Azoarcus sp. (strain BH72) protein is Gamma-glutamyl phosphate reductase.